The sequence spans 353 residues: Nicotinate-nucleotide--dimethylbenzimidazole phosphoribosyltransferase (353 aa).

Glutamate 318 acts as the Proton acceptor in catalysis.

The protein belongs to the CobT family.

It catalyses the reaction 5,6-dimethylbenzimidazole + nicotinate beta-D-ribonucleotide = alpha-ribazole 5'-phosphate + nicotinate + H(+). The protein operates within nucleoside biosynthesis; alpha-ribazole biosynthesis; alpha-ribazole from 5,6-dimethylbenzimidazole: step 1/2. Catalyzes the synthesis of alpha-ribazole-5'-phosphate from nicotinate mononucleotide (NAMN) and 5,6-dimethylbenzimidazole (DMB). The sequence is that of Nicotinate-nucleotide--dimethylbenzimidazole phosphoribosyltransferase from Roseiflexus sp. (strain RS-1).